A 307-amino-acid chain; its full sequence is Oxygen-dependent coproporphyrinogen-III oxidase (307 aa).

Ser99 is a substrate binding site. Residues His103 and His113 each contribute to the a divalent metal cation site. Catalysis depends on His113, which acts as the Proton donor. Residue 115–117 (NVR) coordinates substrate. Residues His152 and His182 each contribute to the a divalent metal cation site. The interval 247 to 282 (YVEFNLVFDRGTLFGLQSGGRTESILMSMPPVANWR) is important for dimerization. 265–267 (GGR) contacts substrate.

It belongs to the aerobic coproporphyrinogen-III oxidase family. In terms of assembly, homodimer. The cofactor is a divalent metal cation.

Its subcellular location is the cytoplasm. The enzyme catalyses coproporphyrinogen III + O2 + 2 H(+) = protoporphyrinogen IX + 2 CO2 + 2 H2O. It functions in the pathway porphyrin-containing compound metabolism; protoporphyrin-IX biosynthesis; protoporphyrinogen-IX from coproporphyrinogen-III (O2 route): step 1/1. In terms of biological role, involved in the heme biosynthesis. Catalyzes the aerobic oxidative decarboxylation of propionate groups of rings A and B of coproporphyrinogen-III to yield the vinyl groups in protoporphyrinogen-IX. The sequence is that of Oxygen-dependent coproporphyrinogen-III oxidase from Burkholderia cenocepacia (strain ATCC BAA-245 / DSM 16553 / LMG 16656 / NCTC 13227 / J2315 / CF5610) (Burkholderia cepacia (strain J2315)).